An 82-amino-acid polypeptide reads, in one-letter code: Sulfur carrier protein TusA (82 aa).

Cysteine 17 serves as the catalytic Cysteine persulfide intermediate.

The protein belongs to the sulfur carrier protein TusA family.

The protein localises to the cytoplasm. Functionally, sulfur carrier protein which probably makes part of a sulfur-relay system. The polypeptide is Sulfur carrier protein TusA (Glaesserella parasuis serovar 5 (strain SH0165) (Haemophilus parasuis)).